We begin with the raw amino-acid sequence, 136 residues long: Small ribosomal subunit protein uS9 (136 aa).

The protein belongs to the universal ribosomal protein uS9 family.

The protein is Small ribosomal subunit protein uS9 of Borrelia turicatae (strain 91E135).